A 390-amino-acid polypeptide reads, in one-letter code: MTTLEAIKFDRTNVTLQILDQLLIPYSTEYLNIEGVDDAYDAIKSMQVRGAPAIAIVGSFAIVVEIKNRHISSIDELAAKIDYLESSRPTAVNLSNACNEIRALLGNSESLDEVYKRVFDFAVALYDDDLSNNHKIGSNGVDYLVESLRSQNFEGPFSIITYCNTGSLATSGHGTALGIVRSAYKALSKENSKEKFWLEQIYPCETRPYNQGAKLTTFELKYEKIPFTLICDNMVTSLISRTHNKKQVKDIVAPVKFAIVGADRIVQNGDTANKIGTFQLAAIFDSFNRRNTGPRDSLKMIVAAPRTTIDLKTTTGDDIIIEERPANELTTLKGPILRKDVAGEKQIVGVATPGIQVWNPAFDVTPHELIDSIVTEEKVYAKDKEGNYHL.

The active-site Proton donor is Asp-263.

The protein belongs to the eIF-2B alpha/beta/delta subunits family. MtnA subfamily.

It is found in the cytoplasm. The protein localises to the nucleus. The catalysed reaction is 5-(methylsulfanyl)-alpha-D-ribose 1-phosphate = 5-(methylsulfanyl)-D-ribulose 1-phosphate. It functions in the pathway amino-acid biosynthesis; L-methionine biosynthesis via salvage pathway; L-methionine from S-methyl-5-thio-alpha-D-ribose 1-phosphate: step 1/6. Catalyzes the interconversion of methylthioribose-1-phosphate (MTR-1-P) into methylthioribulose-1-phosphate (MTRu-1-P). In Meyerozyma guilliermondii (strain ATCC 6260 / CBS 566 / DSM 6381 / JCM 1539 / NBRC 10279 / NRRL Y-324) (Yeast), this protein is Methylthioribose-1-phosphate isomerase.